Here is a 205-residue protein sequence, read N- to C-terminus: Holliday junction branch migration complex subunit RuvA (205 aa).

Residues 1–64 form a domain I region; the sequence is MIGRLRGVLV…EDAQLLYGFI (64 aa). Residues 65-143 are domain II; sequence TKQERALFRL…SLMEASAGSE (79 aa). A flexible linker region spans residues 144–156; it reads REFVLQSNYSPAP. The interval 157-205 is domain III; the sequence is TVNSAEEDAISALISLGYKPPQASKSVSAAYKEGMDSETLIKAALKSML.

This sequence belongs to the RuvA family. Homotetramer. Forms an RuvA(8)-RuvB(12)-Holliday junction (HJ) complex. HJ DNA is sandwiched between 2 RuvA tetramers; dsDNA enters through RuvA and exits via RuvB. An RuvB hexamer assembles on each DNA strand where it exits the tetramer. Each RuvB hexamer is contacted by two RuvA subunits (via domain III) on 2 adjacent RuvB subunits; this complex drives branch migration. In the full resolvosome a probable DNA-RuvA(4)-RuvB(12)-RuvC(2) complex forms which resolves the HJ.

It localises to the cytoplasm. The RuvA-RuvB-RuvC complex processes Holliday junction (HJ) DNA during genetic recombination and DNA repair, while the RuvA-RuvB complex plays an important role in the rescue of blocked DNA replication forks via replication fork reversal (RFR). RuvA specifically binds to HJ cruciform DNA, conferring on it an open structure. The RuvB hexamer acts as an ATP-dependent pump, pulling dsDNA into and through the RuvAB complex. HJ branch migration allows RuvC to scan DNA until it finds its consensus sequence, where it cleaves and resolves the cruciform DNA. The sequence is that of Holliday junction branch migration complex subunit RuvA from Shewanella baltica (strain OS223).